The sequence spans 161 residues: Pupal cuticle protein C1B (161 aa).

Tandem repeats lie at residues 6–9, 14–17, 35–38, 87–90, 103–106, 112–115, 121–124, 130–133, and 143–146.

Its function is as follows. Component of the cuticle of the pupa of Tenebrio molitor. The chain is Pupal cuticle protein C1B from Tenebrio molitor (Yellow mealworm beetle).